Here is a 690-residue protein sequence, read N- to C-terminus: Putative glycerophosphocholine phosphodiesterase GPCPD1 homolog 1 (690 aa).

Residues 1–122 form the CBM20 domain; the sequence is MDQDYKAHFK…RKNITDQFGS (122 aa). Residues 344 to 654 form the GP-PDE domain; the sequence is MLQIGHRGMG…DRIGEDEVLK (311 aa). Residues 670–690 are disordered; that stretch reads ARSQHNSRSPSMSRRCMSTVE. The span at 676–690 shows a compositional bias: low complexity; it reads SRSPSMSRRCMSTVE.

The protein belongs to the glycerophosphoryl diester phosphodiesterase family.

The protein is Putative glycerophosphocholine phosphodiesterase GPCPD1 homolog 1 of Caenorhabditis elegans.